Here is a 140-residue protein sequence, read N- to C-terminus: Peptidyl-prolyl cis-trans isomerase FKBP2 (140 aa).

Residues 1-22 (MRLSWILTILSICLSALAAATG) form the signal peptide. The 89-residue stretch at 47 to 135 (GDVLHMHYTG…VFEVELLKIE (89 aa)) folds into the PPIase FKBP-type domain. The Prevents secretion from ER motif lies at 137-140 (RSEL).

Belongs to the FKBP-type PPIase family. FKBP2 subfamily. In terms of assembly, interacts with ARFGEF1/BIG1 and the C-terminal of EPB41L2.

It is found in the endoplasmic reticulum membrane. The catalysed reaction is [protein]-peptidylproline (omega=180) = [protein]-peptidylproline (omega=0). With respect to regulation, inhibited by both FK506 and rapamycin. Its function is as follows. PPIases accelerate the folding of proteins. It catalyzes the cis-trans isomerization of proline imidic peptide bonds in oligopeptides. In Mus musculus (Mouse), this protein is Peptidyl-prolyl cis-trans isomerase FKBP2 (Fkbp2).